The primary structure comprises 218 residues: Small ribosomal subunit protein uS3 (218 aa).

One can recognise a KH type-2 domain in the interval 38–106; the sequence is IREYISKRLS…RVHINILEIK (69 aa).

This sequence belongs to the universal ribosomal protein uS3 family. As to quaternary structure, part of the 30S ribosomal subunit. Forms a tight complex with proteins S10 and S14.

Binds the lower part of the 30S subunit head. Binds mRNA in the 70S ribosome, positioning it for translation. The polypeptide is Small ribosomal subunit protein uS3 (Bacillus subtilis (strain 168)).